The primary structure comprises 517 residues: GMP synthase [glutamine-hydrolyzing] (517 aa).

The Glutamine amidotransferase type-1 domain maps to 9–199 (RILILDFGSQ…VLNACGCEGL (191 aa)). The active-site Nucleophile is the Cys86. Catalysis depends on residues His173 and Glu175. The 193-residue stretch at 200–392 (WTSASIIEDA…LGLPYNMLYR (193 aa)) folds into the GMPS ATP-PPase domain. An ATP-binding site is contributed by 227–233 (SGGVDSS).

In terms of assembly, homodimer.

It catalyses the reaction XMP + L-glutamine + ATP + H2O = GMP + L-glutamate + AMP + diphosphate + 2 H(+). It participates in purine metabolism; GMP biosynthesis; GMP from XMP (L-Gln route): step 1/1. Catalyzes the synthesis of GMP from XMP. The polypeptide is GMP synthase [glutamine-hydrolyzing] (Vibrio atlanticus (strain LGP32) (Vibrio splendidus (strain Mel32))).